The chain runs to 162 residues: Shikimate kinase (162 aa).

Position 11–16 (11–16 (GSGKSS)) interacts with ATP. Ser-15 is a binding site for Mg(2+). Residues Asp-33, Arg-57, and Gly-80 each contribute to the substrate site. Residue Arg-116 coordinates ATP. A substrate-binding site is contributed by Arg-132.

This sequence belongs to the shikimate kinase family. Monomer. Mg(2+) serves as cofactor.

It is found in the cytoplasm. The enzyme catalyses shikimate + ATP = 3-phosphoshikimate + ADP + H(+). The protein operates within metabolic intermediate biosynthesis; chorismate biosynthesis; chorismate from D-erythrose 4-phosphate and phosphoenolpyruvate: step 5/7. In terms of biological role, catalyzes the specific phosphorylation of the 3-hydroxyl group of shikimic acid using ATP as a cosubstrate. In Helicobacter pylori (strain HPAG1), this protein is Shikimate kinase.